A 129-amino-acid polypeptide reads, in one-letter code: Large ribosomal subunit protein bL17 (129 aa).

It belongs to the bacterial ribosomal protein bL17 family. As to quaternary structure, part of the 50S ribosomal subunit. Contacts protein L32.

In Buchnera aphidicola subsp. Baizongia pistaciae (strain Bp), this protein is Large ribosomal subunit protein bL17.